Consider the following 1244-residue polypeptide: SWI/SNF chromatin remodeling complex subunit swsn-7 (1244 aa).

Residues 24-116 (QRKMAEFYNS…YLSKFEQVET (93 aa)) enclose the ARID domain. Polar residues predominate over residues 486–496 (FTQGSNQQQNP). Disordered regions lie at residues 486 to 534 (FTQG…GAAP), 556 to 583 (NREQYSTQSSQPHPPHTNVPPSPSILAH), and 597 to 619 (DRRTGNLPVRPIAPSTNSGESQL). Residues 497–508 (HHSQGGHQLGHS) show a composition bias toward low complexity. Polar residues predominate over residues 556-566 (NREQYSTQSSQ). Residues 567–578 (PHPPHTNVPPSP) are compositionally biased toward pro residues. Residues 610-619 (PSTNSGESQL) show a composition bias toward polar residues. A DNA-binding region (RFX-type winged-helix) is located at residues 623–697 (TEKWIRQNCV…IVAQGIRLIR (75 aa)). The tract at residues 1134 to 1244 (EEEQQKMLSE…TTPVRAGAGI (111 aa)) is disordered. Residues 1142–1158 (SEVPSSASLSSMAGSSS) show a composition bias toward low complexity. 2 stretches are compositionally biased toward polar residues: residues 1159–1186 (QLPTVPDSPTSSVASAPMKESTSVSNKP) and 1194–1212 (LNFSSLNEKTPTSPQFTAG). Residues 1220–1231 (PIQQHIPSQPSP) are compositionally biased toward low complexity.

In terms of assembly, component of the SWI/SNF-B (PBAF) chromatin remodeling complex.

The protein resides in the nucleus. Functionally, involved in transcriptional activation and repression of select genes by chromatin remodeling (alteration of DNA-nucleosome topology). Required for the stability of the SWI/SNF chromatin remodeling complex SWI/SNF-B (PBAF). Required for regulation of a stress response gene network, probably as part of the PBAF complex and perhaps acting in concert with histone demethylase jmjc-1. Binds to the ethanol and stress response elements (ESRE) in the promoter regions of hsp-16.1 and hsp-16.2, probably as part of the PBAF complex. The sequence is that of SWI/SNF chromatin remodeling complex subunit swsn-7 from Caenorhabditis elegans.